Reading from the N-terminus, the 254-residue chain is Thiazole synthase (254 aa).

Catalysis depends on lysine 95, which acts as the Schiff-base intermediate with DXP. 1-deoxy-D-xylulose 5-phosphate is bound by residues glycine 156, 182–183 (AG), and 204–205 (NT).

The protein belongs to the ThiG family. As to quaternary structure, homotetramer. Forms heterodimers with either ThiH or ThiS.

It localises to the cytoplasm. The catalysed reaction is [ThiS sulfur-carrier protein]-C-terminal-Gly-aminoethanethioate + 2-iminoacetate + 1-deoxy-D-xylulose 5-phosphate = [ThiS sulfur-carrier protein]-C-terminal Gly-Gly + 2-[(2R,5Z)-2-carboxy-4-methylthiazol-5(2H)-ylidene]ethyl phosphate + 2 H2O + H(+). The protein operates within cofactor biosynthesis; thiamine diphosphate biosynthesis. Catalyzes the rearrangement of 1-deoxy-D-xylulose 5-phosphate (DXP) to produce the thiazole phosphate moiety of thiamine. Sulfur is provided by the thiocarboxylate moiety of the carrier protein ThiS. In vitro, sulfur can be provided by H(2)S. This Shewanella sp. (strain MR-7) protein is Thiazole synthase.